The primary structure comprises 608 residues: MNYLTILLCNRKPTMLSRRNKEKSQHKEGVVGKYMKKDTPPDISVINVWSDQRAKKKSLQRCASTSPSCEFHPRSSSTSRNTYSCTDSQPDYYHARRAQSQMPLQQHSHSHPHSLPHPSHPHVRSHPPLPPHQFRASSNQLSQNSSNYVNFEQIERMRRQQSSPLLQTTSSPAPGAGGFQRSYSTTQRQHHPHLGGDSYDADQGLLSASYANMLQLPQRPHSPAHYAVPPQQQQHPQIHQQHASTPFGSTLRFDRAAMSIRERQPRYQPTSSPMQQQQQQQQQQQQQLQHTQLAAHLGGSYSSDSYPIYENPSRVISMRATQSQRSESPIYSNTTASSATLAVVPQHHHQGHLAVPSGSGGGSLSGSGRGGSSGSVRGASTSVQSLYVPPRTPPSAVAGAGGSANGSLQKVPSQQSLTEPEELPLPPGWATQYTLHGRKYYIDHNAHTTHWNHPLEREGLPVGWRRVVSKMHGTYYENQYTGQSQRQHPCLTSYYVYTTSAEPPKAIRPEASLYAPPTHTHNALVPANPYLLEEIPKWLAVYSEADSSKDHLLQFNMFSLPELEGFDSMLVRLFKQELGTIVGFYERYRRALILEKNRRAGQNQNQNQ.

6 disordered regions span residues 17-37 (SRRNKEKSQHKEGVVGKYMKK), 64-145 (STSP…SQNS), 157-202 (MRRQ…YDAD), 220-243 (PHSPAHYAVPPQQQQHPQIHQQHA), 264-293 (QPRYQPTSSPMQQQQQQQQQQQQQLQHTQL), and 345-425 (PQHH…ELPL). Positions 22 to 37 (EKSQHKEGVVGKYMKK) are enriched in basic and acidic residues. The Ferm-binding motif (FBM) motif lies at 32 to 38 (GKYMKKD). A compositionally biased stretch (polar residues) spans 64–89 (STSPSCEFHPRSSSTSRNTYSCTDSQ). Over residues 108 to 125 (SHSHPHSLPHPSHPHVRS) the composition is skewed to basic residues. Low complexity-rich tracts occupy residues 160–172 (QQSSPLLQTTSSP), 229–242 (PPQQQQHPQIHQQH), and 275–289 (QQQQQQQQQQQQQLQ). Residues 274–294 (MQQQQQQQQQQQQQLQHTQLA) are a coiled coil. The segment covering 358–373 (GSGGGSLSGSGRGGSS) has biased composition (gly residues). Ser-413 and Ser-416 each carry phosphoserine. 2 consecutive WW domains span residues 423 to 456 (LPLPPGWATQYTLHGRKYYIDHNAHTTHWNHPLE) and 458 to 491 (EGLPVGWRRVVSKMHGTYYENQYTGQSQRQHPCL). The SARAH domain occupies 552-599 (LLQFNMFSLPELEGFDSMLVRLFKQELGTIVGFYERYRRALILEKNRR).

In terms of assembly, interacts with Wts via its WW domains. Interacts (via FBM motif) with Mer (via FERM domain). Interacts with Kibra. Interacts with Hpo (via SARAH domain). Interacts with jub. In terms of processing, phosphorylated by Hpo. As to expression, third instar larvae eye disk, expressed in a stripe in the morphogenetic furrow, decreases in the region of the second mitotic wave (SMW) and increases once again posterior to the SMW.

In terms of biological role, plays a key role in the Hippo/SWH (Sav/Wts/Hpo) signaling pathway, a signaling pathway that plays a pivotal role in organ size control and tumor suppression by restricting proliferation and promoting apoptosis. The core of this pathway is composed of a kinase cascade wherein Hippo (Hpo), in complex with its regulatory protein Salvador (Sav), phosphorylates and activates Warts (Wts) in complex with its regulatory protein Mats, which in turn phosphorylates and inactivates the Yorkie (Yki) oncoprotein. The Hippo/SWH signaling pathway inhibits the activity of the transcriptional complex formed by Scalloped (sd) and Yki and the target genes of this pathway include cyclin-E (cycE), diap1 and bantam. Required for cell cycle exit in eye imaginal disk and hid-induced apoptotic cell deaths that are part of normal retinal development. Activation of Drice in eye imaginal disk by either Hid or Rpr is almost completely blocked by Sav expression. The sequence is that of Scaffold protein salvador (sav) from Drosophila melanogaster (Fruit fly).